The chain runs to 327 residues: Thiamine-binding periplasmic protein (327 aa).

The N-terminal stretch at 1 to 18 is a signal peptide; sequence MLKKYLPLLLLCAAPAFA. Thiamine-binding positions include 59 to 60, 161 to 162, tryptophan 197, and 215 to 218; these read DG, ST, and YTTS.

This sequence belongs to the bacterial solute-binding protein 1 family. In terms of assembly, the complex is composed of two ATP-binding proteins (ThiQ), two transmembrane proteins (ThiP) and a solute-binding protein (ThiB).

It localises to the periplasm. Functionally, part of the ABC transporter complex ThiBPQ involved in thiamine import. Is also involved in thiamine pyrophosphate transport. In Salmonella typhimurium (strain LT2 / SGSC1412 / ATCC 700720), this protein is Thiamine-binding periplasmic protein.